Here is a 238-residue protein sequence, read N- to C-terminus: Protein MIS12 homolog (238 aa).

A coiled-coil region spans residues 117-149; it reads ELDAELDSLRDKLNVVGKRSVELDSELQALERS.

It belongs to the mis12 family.

The protein resides in the chromosome. It localises to the centromere. The protein localises to the kinetochore. Its function is as follows. Constitutive component of kinetochores that is essential for proper cell division during mitotic cell cycle. May play a role in the modulation of centromere during meiosis. The protein is Protein MIS12 homolog of Arabidopsis thaliana (Mouse-ear cress).